Reading from the N-terminus, the 299-residue chain is Putative zinc-binding protein ORF12 (299 aa).

The polypeptide is Putative zinc-binding protein ORF12 (ORF12) (Ictaluridae (bullhead catfishes)).